The following is a 257-amino-acid chain: Imidazole glycerol phosphate synthase subunit HisF (257 aa).

Residues D11 and D130 contribute to the active site.

The protein belongs to the HisA/HisF family. Heterodimer of HisH and HisF.

Its subcellular location is the cytoplasm. The catalysed reaction is 5-[(5-phospho-1-deoxy-D-ribulos-1-ylimino)methylamino]-1-(5-phospho-beta-D-ribosyl)imidazole-4-carboxamide + L-glutamine = D-erythro-1-(imidazol-4-yl)glycerol 3-phosphate + 5-amino-1-(5-phospho-beta-D-ribosyl)imidazole-4-carboxamide + L-glutamate + H(+). It participates in amino-acid biosynthesis; L-histidine biosynthesis; L-histidine from 5-phospho-alpha-D-ribose 1-diphosphate: step 5/9. Its function is as follows. IGPS catalyzes the conversion of PRFAR and glutamine to IGP, AICAR and glutamate. The HisF subunit catalyzes the cyclization activity that produces IGP and AICAR from PRFAR using the ammonia provided by the HisH subunit. The chain is Imidazole glycerol phosphate synthase subunit HisF from Xylella fastidiosa (strain M23).